The following is a 1249-amino-acid chain: Calmodulin-regulated spectrin-associated protein 3 (1249 aa).

Disordered stretches follow at residues 183-205 (KTEQ…APAQ), 328-385 (PDGH…SMSH), 430-457 (VSSD…GDLP), 473-609 (LLPD…RLEE), 632-696 (LGKS…HEGL), 714-1029 (QRDM…SALA), and 1061-1111 (NNLG…TGPR). T184 is modified (phosphothreonine). Residues 189–205 (AQRASPAAPADGAAPAQ) show a composition bias toward low complexity. The residue at position 193 (S193) is a Phosphoserine. The 110-residue stretch at 203–312 (PAQPSIRYRK…LVVMLAELFM (110 aa)) folds into the Calponin-homology (CH) domain. Phosphoserine occurs at positions 334, 341, 347, 351, 368, 373, and 382. The segment covering 341–352 (SPPQNNSGSSSP) has biased composition (low complexity). Over residues 364–383 (GGPQSPLRGSTGSLKSSPSM) the composition is skewed to polar residues. Residues 437–454 (PPRPAPARTPTQPPPEPG) show a composition bias toward pro residues. 3 positions are modified to phosphoserine: S547, S554, and S560. Positions 568–579 (AERKKQLVKAEA) are enriched in basic and acidic residues. Residues 594–604 (EALSSEMSELS) are compositionally biased toward low complexity. Residues 594 to 628 (EALSSEMSELSARLEEKRRAIEAQKRRIEAIFAKH) are a coiled coil. Residues 647-657 (GEAEAEAEEAD) are compositionally biased toward acidic residues. Position 685 is a phosphoserine (S685). Residues 696–729 (LGEYNRAVSKLSAALSSLQRDMQRLTDQQQRLLA) are a coiled coil. Residues 731–741 (PEAPGSAPPPA) show a composition bias toward pro residues. The segment covering 754 to 779 (AASPSPARRVPATRRSPGPGPSQSPR) has biased composition (low complexity). S769 bears the Phosphoserine mark. Residue T799 is modified to Phosphothreonine. Phosphoserine is present on S814. Residues 814 to 825 (SPSQVPVQTRSS) show a composition bias toward polar residues. Over residues 889–940 (YKDEDKPEDEMAQKRASLLERQQRRAEEARRRKQWQEVEKEQRREEAARLAQ) the composition is skewed to basic and acidic residues. Positions 896-935 (EDEMAQKRASLLERQQRRAEEARRRKQWQEVEKEQRREEA) form a coiled coil. Over residues 950–964 (VSAVPMATPAPAARA) the composition is skewed to low complexity. The span at 970–998 (VGPRKGDFTRQEYERRAQLKLMDDLDKVL) shows a compositional bias: basic and acidic residues. The residue at position 1074 (S1074) is a Phosphoserine. A CKK domain is found at 1109–1243 (GPRLYKEPSA…QGKKPTTPKK (135 aa)).

Belongs to the CAMSAP1 family. In terms of assembly, interacts with PLEKHA7. Interacts with CAMSAP2. Interacts with KATNA1 and KATNB1; leading to regulate the length of CAMSAP3-decorated microtubule stretches. Interacts with AKAP9; regulating Golgi assembly in epithelial cells. Interacts with MACF1. Interacts with AKNA.

It localises to the cytoplasm. Its subcellular location is the cytoskeleton. The protein resides in the cell junction. The protein localises to the adherens junction. It is found in the cilium axoneme. It localises to the cilium basal body. Its function is as follows. Key microtubule-organizing protein that specifically binds the minus-end of non-centrosomal microtubules and regulates their dynamics and organization. Specifically recognizes growing microtubule minus-ends and autonomously decorates and stabilizes microtubule lattice formed by microtubule minus-end polymerization. Acts on free microtubule minus-ends that are not capped by microtubule-nucleating proteins or other factors and protects microtubule minus-ends from depolymerization. In addition, it also reduces the velocity of microtubule polymerization. Required for the biogenesis and the maintenance of zonula adherens by anchoring the minus-end of microtubules to zonula adherens and by recruiting the kinesin KIFC3 to those junctional sites. Required for orienting the apical-to-basal polarity of microtubules in epithelial cells: acts by tethering non-centrosomal microtubules to the apical cortex, leading to their longitudinal orientation. Plays a key role in early embryos, which lack centrosomes: accumulates at the microtubule bridges that connect pairs of cells and enables the formation of a non-centrosomal microtubule-organizing center that directs intracellular transport in the early embryo. Couples non-centrosomal microtubules with actin: interaction with MACF1 at the minus ends of non-centrosomal microtubules, tethers the microtubules to actin filaments, regulating focal adhesion size and cell migration. Plays a key role in the generation of non-centrosomal microtubules by accumulating in the pericentrosomal region and cooperating with KATNA1 to release non-centrosomal microtubules from the centrosome. Through the microtubule cytoskeleton, also regulates the organization of cellular organelles including the Golgi and the early endosomes. Through interaction with AKAP9, involved in translocation of Golgi vesicles in epithelial cells, where microtubules are mainly non-centrosomal. Plays an important role in motile cilia function by facilitatating proper orientation of basal bodies and formation of central microtubule pairs in motile cilia. This is Calmodulin-regulated spectrin-associated protein 3 from Homo sapiens (Human).